Here is a 198-residue protein sequence, read N- to C-terminus: Regulation of enolase protein 1 (198 aa).

The protein resides in the cytoplasm. Functions in the galactose metabolic pathway via the GAL83 protein and that it may control the level of ENO1. The polypeptide is Regulation of enolase protein 1 (REE1) (Saccharomyces cerevisiae (strain ATCC 204508 / S288c) (Baker's yeast)).